The following is a 222-amino-acid chain: 7-cyano-7-deazaguanine synthase (222 aa).

Position 11–21 (11–21 (FSGGQDSTTCL)) interacts with ATP. Zn(2+)-binding residues include C187, C195, C198, and C201.

The protein belongs to the QueC family. The cofactor is Zn(2+).

The enzyme catalyses 7-carboxy-7-deazaguanine + NH4(+) + ATP = 7-cyano-7-deazaguanine + ADP + phosphate + H2O + H(+). It functions in the pathway purine metabolism; 7-cyano-7-deazaguanine biosynthesis. Functionally, catalyzes the ATP-dependent conversion of 7-carboxy-7-deazaguanine (CDG) to 7-cyano-7-deazaguanine (preQ(0)). In Actinobacillus pleuropneumoniae serotype 7 (strain AP76), this protein is 7-cyano-7-deazaguanine synthase.